A 1019-amino-acid polypeptide reads, in one-letter code: MSKNDNQDISEFDPLNREFTEAEKQQQMQQEQEFFSQSILDIVDDGFIVASSSQSTPSISVLSNSLPHGDQKSDPITEAIRKEILEKQRDILREYLANTNPELAAQIAKEEDDKKFRAFLSNQDNYALINKAFEDPETKKNLEEVEIVGYRNILSTYSAASGYPGGFQPVQWENQVSASDLRSTVVKNDAGEELCTLNETTIKTNSLIVAKQDGTQVQINSYREIDFPIKLDKADGSMHLSMVALKADGTKPAKDKAVYFTAHYEEGPNGKPQLKEISSPQPLKFVGTGDDAVAYIEHGGEIYTLAVTRGKYKAMMKEVALNNGQSVDLSQTIAEDLTKVQGPSHVRHTPIITPNQELELSIETHSNQQVPPITTFNKPLQPEISQTHQLQPQQAQSSGIPNLVLNAAHALSISMQDLLHNINASLTQKQDINKQSDLIKEAANTILNNKKSDFAEKQYNIIALTENTLSNKDIIADAKVNVVSALLETIQNDQNTLDIQKSKILEATVAITLNSENIELKQKQQILEKVVDVSLSIKDDISRAVAIDSITDAVIKSNIANKDKEQIFMTIFDQVNSYEFSNITKQKLLGSMLKKAVETKVISPEQQQLIHQNLDKITTEHTKRDTIEKVNNILLDPFSNTVLKTTNIQVITANVLDSPVPVEIKSELIQVVTQKVAESALEPKDKTEIVKGIGKIIATHSDTSLPLYDKGVIMESVAKGIVESKTDLRERELITEGLVNGIYEVKGDKAVVHAISSVIANSNINQSEKEVLKKSQDIVSERVLDKEIQNLDGELKEKNIEESKLRDDIYNKTQDVANELNIKTFLDDNHGKREVSEEVPKNTSSLLNDISQRTIEKVNNLRAMLSQDANLKTFEEKKDESTKKVDELVKAFDNKSSTEEQQNFIKSHLIDNKTLSREVRLQIIDNLLKAQAQKRAETIENLSAKTEDVRVVSGKSELEPISKDEPYIQKAKMVVERDRVGIKDNIKIMGALINARDSIQSENLNKSTHIKKESSVPQR.

Positions 1–33 (MSKNDNQDISEFDPLNREFTEAEKQQQMQQEQE) are disordered. The segment covering 14-24 (PLNREFTEAEK) has biased composition (basic and acidic residues).

Its subcellular location is the cytoplasm. The chain is Antigenic heat-stable 120 kDa protein (sca4) from Rickettsia typhi (strain ATCC VR-144 / Wilmington).